The following is a 418-amino-acid chain: Light-independent protochlorophyllide reductase subunit N (418 aa).

[4Fe-4S] cluster contacts are provided by Cys17, Cys42, and Cys103.

This sequence belongs to the BchN/ChlN family. As to quaternary structure, protochlorophyllide reductase is composed of three subunits; ChlL, ChlN and ChlB. Forms a heterotetramer of two ChlB and two ChlN subunits. It depends on [4Fe-4S] cluster as a cofactor.

The enzyme catalyses chlorophyllide a + oxidized 2[4Fe-4S]-[ferredoxin] + 2 ADP + 2 phosphate = protochlorophyllide a + reduced 2[4Fe-4S]-[ferredoxin] + 2 ATP + 2 H2O. Its pathway is porphyrin-containing compound metabolism; chlorophyll biosynthesis (light-independent). Functionally, component of the dark-operative protochlorophyllide reductase (DPOR) that uses Mg-ATP and reduced ferredoxin to reduce ring D of protochlorophyllide (Pchlide) to form chlorophyllide a (Chlide). This reaction is light-independent. The NB-protein (ChlN-ChlB) is the catalytic component of the complex. The polypeptide is Light-independent protochlorophyllide reductase subunit N (Prochlorococcus marinus (strain MIT 9313)).